We begin with the raw amino-acid sequence, 554 residues long: CTP synthase (554 aa).

The tract at residues 1-279 (MSQPRAEHVT…DAFLIRRLDL (279 aa)) is amidoligase domain. A CTP-binding site is contributed by Ser21. A UTP-binding site is contributed by Ser21. ATP contacts are provided by residues 22-27 (SLGKGL) and Asp79. Mg(2+) contacts are provided by Asp79 and Glu153. CTP is bound by residues 160-162 (DIE), 200-205 (KTKPTQ), and Lys236. UTP is bound by residues 200 to 205 (KTKPTQ) and Lys236. In terms of domain architecture, Glutamine amidotransferase type-1 spans 304-551 (TVALVGKYID…VKAGLKHKND (248 aa)). Gly367 serves as a coordination point for L-glutamine. Cys394 acts as the Nucleophile; for glutamine hydrolysis in catalysis. Residues 395-398 (LGLQ), Glu417, and Arg478 contribute to the L-glutamine site. Catalysis depends on residues His524 and Glu526.

The protein belongs to the CTP synthase family. As to quaternary structure, homotetramer.

The catalysed reaction is UTP + L-glutamine + ATP + H2O = CTP + L-glutamate + ADP + phosphate + 2 H(+). The enzyme catalyses L-glutamine + H2O = L-glutamate + NH4(+). It carries out the reaction UTP + NH4(+) + ATP = CTP + ADP + phosphate + 2 H(+). It functions in the pathway pyrimidine metabolism; CTP biosynthesis via de novo pathway; CTP from UDP: step 2/2. Its activity is regulated as follows. Allosterically activated by GTP, when glutamine is the substrate; GTP has no effect on the reaction when ammonia is the substrate. The allosteric effector GTP functions by stabilizing the protein conformation that binds the tetrahedral intermediate(s) formed during glutamine hydrolysis. Inhibited by the product CTP, via allosteric rather than competitive inhibition. Functionally, catalyzes the ATP-dependent amination of UTP to CTP with either L-glutamine or ammonia as the source of nitrogen. Regulates intracellular CTP levels through interactions with the four ribonucleotide triphosphates. This chain is CTP synthase, found in Corynebacterium kroppenstedtii (strain DSM 44385 / JCM 11950 / CIP 105744 / CCUG 35717).